The chain runs to 299 residues: Regucalcin (299 aa).

Glutamate 18 contributes to the a divalent metal cation binding site. The substrate site is built by arginine 101, asparagine 103, and glutamate 121. Position 144 is an N6-succinyllysine (lysine 144). A divalent metal cation-binding residues include asparagine 154 and aspartate 204. Aspartate 204 (proton donor/acceptor) is an active-site residue. N6-succinyllysine occurs at positions 244 and 253.

It belongs to the SMP-30/CGR1 family. As to quaternary structure, monomer. It depends on Zn(2+) as a cofactor. Mn(2+) is required as a cofactor. Requires Ca(2+) as cofactor. Mg(2+) serves as cofactor.

The protein localises to the cytoplasm. It carries out the reaction D-glucono-1,5-lactone + H2O = D-gluconate + H(+). In terms of biological role, gluconolactonase with low activity towards other sugar lactones, including gulonolactone and galactonolactone. Can also hydrolyze diisopropyl phosphorofluoridate and phenylacetate (in vitro). Calcium-binding protein. Modulates Ca(2+) signaling, and Ca(2+)-dependent cellular processes and enzyme activities. In Homo sapiens (Human), this protein is Regucalcin (RGN).